The chain runs to 873 residues: Bifunctional uridylyltransferase/uridylyl-removing enzyme (873 aa).

The segment at Met-1–Ile-332 is uridylyltransferase. The tract at residues Ile-333–Thr-692 is uridylyl-removing. The HD domain maps to Val-451 to Leu-573. ACT domains follow at residues Glu-693–Arg-773 and Leu-800–Pro-873.

The protein belongs to the GlnD family. It depends on Mg(2+) as a cofactor.

The enzyme catalyses [protein-PII]-L-tyrosine + UTP = [protein-PII]-uridylyl-L-tyrosine + diphosphate. The catalysed reaction is [protein-PII]-uridylyl-L-tyrosine + H2O = [protein-PII]-L-tyrosine + UMP + H(+). Its activity is regulated as follows. Uridylyltransferase (UTase) activity is inhibited by glutamine, while glutamine activates uridylyl-removing (UR) activity. Its function is as follows. Modifies, by uridylylation and deuridylylation, the PII regulatory proteins (GlnB and homologs), in response to the nitrogen status of the cell that GlnD senses through the glutamine level. Under low glutamine levels, catalyzes the conversion of the PII proteins and UTP to PII-UMP and PPi, while under higher glutamine levels, GlnD hydrolyzes PII-UMP to PII and UMP (deuridylylation). Thus, controls uridylylation state and activity of the PII proteins, and plays an important role in the regulation of nitrogen assimilation and metabolism. This Vibrio vulnificus (strain YJ016) protein is Bifunctional uridylyltransferase/uridylyl-removing enzyme.